We begin with the raw amino-acid sequence, 146 residues long: Antirestriction protein KlcA (146 aa).

This sequence belongs to the antirestriction protein family.

Could be involved in overcoming restriction barriers during establishment after conjugative transfer. In Escherichia coli, this protein is Antirestriction protein KlcA (klcA).